The primary structure comprises 123 residues: Large ribosomal subunit protein bL17 (123 aa).

The protein belongs to the bacterial ribosomal protein bL17 family. As to quaternary structure, part of the 50S ribosomal subunit. Contacts protein L32.

In Borrelia garinii subsp. bavariensis (strain ATCC BAA-2496 / DSM 23469 / PBi) (Borreliella bavariensis), this protein is Large ribosomal subunit protein bL17.